The chain runs to 521 residues: GMP synthase [glutamine-hydrolyzing] (521 aa).

The 193-residue stretch at 5–197 (KILILDFGSQ…VLDICGAQPS (193 aa)) folds into the Glutamine amidotransferase type-1 domain. Catalysis depends on Cys-81, which acts as the Nucleophile. Active-site residues include His-171 and Glu-173. The GMPS ATP-PPase domain occupies 198–390 (WTMPNYIEEA…LGLPREMVYR (193 aa)). 225 to 231 (SGGVDSS) is an ATP binding site.

Homodimer.

It carries out the reaction XMP + L-glutamine + ATP + H2O = GMP + L-glutamate + AMP + diphosphate + 2 H(+). Its pathway is purine metabolism; GMP biosynthesis; GMP from XMP (L-Gln route): step 1/1. Functionally, catalyzes the synthesis of GMP from XMP. The chain is GMP synthase [glutamine-hydrolyzing] from Neisseria meningitidis serogroup C / serotype 2a (strain ATCC 700532 / DSM 15464 / FAM18).